Here is a 128-residue protein sequence, read N- to C-terminus: 3-aminoacrylate deaminase RutC (128 aa).

The protein belongs to the RutC family.

The catalysed reaction is (Z)-3-aminoacrylate + H2O + H(+) = 3-oxopropanoate + NH4(+). Functionally, involved in pyrimidine catabolism. Catalyzes the deamination of 3-aminoacrylate to malonic semialdehyde, a reaction that can also occur spontaneously. RutC may facilitate the reaction and modulate the metabolic fitness, rather than catalyzing essential functions. The protein is 3-aminoacrylate deaminase RutC of Agrobacterium fabrum (strain C58 / ATCC 33970) (Agrobacterium tumefaciens (strain C58)).